Reading from the N-terminus, the 29-residue chain is GLWSTIKQKGKEAAIAAAKAAGQAALGAL.

Leucine 29 carries the post-translational modification Leucine amide.

Belongs to the frog skin active peptide (FSAP) family. Dermaseptin subfamily. In terms of tissue distribution, expressed by the skin glands.

Its subcellular location is the secreted. Its function is as follows. Has antibacterial activity against the Gram-negative bacterium E.coli and the Gram-positive bacterium S.aureus. Has antiprotozoal activity against L.amazonensis. Has antifungal activity. Has no hemolytic activity. The chain is Dermaseptin-H7 from Pithecopus hypochondrialis (Orange-legged leaf frog).